Here is a 156-residue protein sequence, read N- to C-terminus: ATP synthase subunit b (156 aa).

The helical transmembrane segment at 11 to 31 threads the bilayer; sequence AIAFILFVWFCMKYVWPPLMA.

The protein belongs to the ATPase B chain family. In terms of assembly, F-type ATPases have 2 components, F(1) - the catalytic core - and F(0) - the membrane proton channel. F(1) has five subunits: alpha(3), beta(3), gamma(1), delta(1), epsilon(1). F(0) has three main subunits: a(1), b(2) and c(10-14). The alpha and beta chains form an alternating ring which encloses part of the gamma chain. F(1) is attached to F(0) by a central stalk formed by the gamma and epsilon chains, while a peripheral stalk is formed by the delta and b chains.

Its subcellular location is the cell inner membrane. In terms of biological role, f(1)F(0) ATP synthase produces ATP from ADP in the presence of a proton or sodium gradient. F-type ATPases consist of two structural domains, F(1) containing the extramembraneous catalytic core and F(0) containing the membrane proton channel, linked together by a central stalk and a peripheral stalk. During catalysis, ATP synthesis in the catalytic domain of F(1) is coupled via a rotary mechanism of the central stalk subunits to proton translocation. Its function is as follows. Component of the F(0) channel, it forms part of the peripheral stalk, linking F(1) to F(0). The protein is ATP synthase subunit b of Salmonella gallinarum (strain 287/91 / NCTC 13346).